The chain runs to 338 residues: Lipoate-protein ligase A (338 aa).

In terms of domain architecture, BPL/LPL catalytic spans 29-216; that stretch reads PATQRVLFLW…AFFVHYGERV (188 aa). ATP contacts are provided by residues Arg-71, 76–79, and Lys-134; that span reads GAVF. Residue Lys-134 participates in (R)-lipoate binding.

It belongs to the LplA family. In terms of assembly, monomer.

It is found in the cytoplasm. It catalyses the reaction L-lysyl-[lipoyl-carrier protein] + (R)-lipoate + ATP = N(6)-[(R)-lipoyl]-L-lysyl-[lipoyl-carrier protein] + AMP + diphosphate + H(+). It participates in protein modification; protein lipoylation via exogenous pathway; protein N(6)-(lipoyl)lysine from lipoate: step 1/2. Its pathway is protein modification; protein lipoylation via exogenous pathway; protein N(6)-(lipoyl)lysine from lipoate: step 2/2. Its function is as follows. Catalyzes both the ATP-dependent activation of exogenously supplied lipoate to lipoyl-AMP and the transfer of the activated lipoyl onto the lipoyl domains of lipoate-dependent enzymes. This Salmonella newport (strain SL254) protein is Lipoate-protein ligase A.